Reading from the N-terminus, the 1117-residue chain is Protein ECM21 (1117 aa).

Disordered stretches follow at residues 1–48 (MPFI…RRSS) and 63–155 (VHSP…YSQI). Polar residues predominate over residues 11 to 34 (KNSSHSLSETDLNQSKGQPFQPSP). At Ser18 the chain carries Phosphoserine. Residues 70 to 81 (NNTTKGGNNNGN) show a composition bias toward low complexity. Ser115 is modified (phosphoserine). Residues 117–130 (SDSATTTPRSSTSD) show a composition bias toward low complexity. Ser140 is subject to Phosphoserine. Lys191 participates in a covalent cross-link: Glycyl lysine isopeptide (Lys-Gly) (interchain with G-Cter in ubiquitin). Disordered stretches follow at residues 275 to 312 (ATTA…ELNT) and 486 to 523 (YRQD…AQAH). Phosphoserine is present on Ser286. Low complexity predominate over residues 501 to 519 (SSSSLSSTTSSLKLTETES). Phosphoserine occurs at positions 527 and 550. Glycyl lysine isopeptide (Lys-Gly) (interchain with G-Cter in ubiquitin) cross-links involve residues Lys577, Lys651, and Lys712. A Phosphoserine modification is found at Ser775. Residues Lys794, Lys807, and Lys1024 each participate in a glycyl lysine isopeptide (Lys-Gly) (interchain with G-Cter in ubiquitin) cross-link. Disordered regions lie at residues 1016–1065 (RSRF…KDKQ) and 1079–1117 (KDDE…SDEE). Positions 1027-1059 (STPSPVNRSHNSSPTNGLSQANGTVRIPNATTE) are enriched in polar residues. The residue at position 1035 (Ser1035) is a Phosphoserine. Residues 1089-1098 (SSSSADSLLS) are compositionally biased toward low complexity.

Belongs to the CSR2 family.

The protein localises to the cytoplasm. Functionally, may be involved in cell wall organization and biogenesis. The sequence is that of Protein ECM21 (ECM21) from Saccharomyces cerevisiae (strain ATCC 204508 / S288c) (Baker's yeast).